The sequence spans 266 residues: 22 kDa alpha-zein 8 (266 aa).

A signal peptide spans 1–21 (MATKILALLALLALFVSATNA).

This sequence belongs to the zein family.

Its function is as follows. Zeins are major seed storage proteins. This Zea mays (Maize) protein is 22 kDa alpha-zein 8.